The primary structure comprises 25 residues: Xenoposin precursor fragment R2 (25 aa).

Expressed by the skin glands.

The protein localises to the secreted. Antimicrobial peptide. The protein is Xenoposin precursor fragment R2 of Xenopus ruwenzoriensis (Uganda clawed frog).